The following is a 246-amino-acid chain: Probable transcriptional regulatory protein YebC (246 aa).

Residues 1-20 (MAGHSKWANTRHRKAAQDAK) form a disordered region.

It belongs to the TACO1 family.

It is found in the cytoplasm. In Salmonella typhimurium (strain LT2 / SGSC1412 / ATCC 700720), this protein is Probable transcriptional regulatory protein YebC.